Consider the following 106-residue polypeptide: Iron-sulfur cluster assembly protein CyaY (106 aa).

Belongs to the frataxin family.

Functionally, involved in iron-sulfur (Fe-S) cluster assembly. May act as a regulator of Fe-S biogenesis. In Pectobacterium atrosepticum (strain SCRI 1043 / ATCC BAA-672) (Erwinia carotovora subsp. atroseptica), this protein is Iron-sulfur cluster assembly protein CyaY.